The following is a 433-amino-acid chain: Glutamate-1-semialdehyde 2,1-aminomutase (433 aa).

Lys273 is subject to N6-(pyridoxal phosphate)lysine.

The protein belongs to the class-III pyridoxal-phosphate-dependent aminotransferase family. HemL subfamily. In terms of assembly, homodimer. Pyridoxal 5'-phosphate is required as a cofactor.

It is found in the cytoplasm. The catalysed reaction is (S)-4-amino-5-oxopentanoate = 5-aminolevulinate. It participates in porphyrin-containing compound metabolism; protoporphyrin-IX biosynthesis; 5-aminolevulinate from L-glutamyl-tRNA(Glu): step 2/2. This Ralstonia nicotianae (strain ATCC BAA-1114 / GMI1000) (Ralstonia solanacearum) protein is Glutamate-1-semialdehyde 2,1-aminomutase.